The primary structure comprises 92 residues: PqqA binding protein (92 aa).

Belongs to the PqqD family. Monomer. Interacts with PqqE.

Its pathway is cofactor biosynthesis; pyrroloquinoline quinone biosynthesis. Functions as a PqqA binding protein and presents PqqA to PqqE, in the pyrroloquinoline quinone (PQQ) biosynthetic pathway. The chain is PqqA binding protein from Xanthomonas oryzae pv. oryzae (strain PXO99A).